Consider the following 377-residue polypeptide: Putative glutamate--cysteine ligase 2 (377 aa).

It belongs to the glutamate--cysteine ligase type 2 family. YbdK subfamily.

It carries out the reaction L-cysteine + L-glutamate + ATP = gamma-L-glutamyl-L-cysteine + ADP + phosphate + H(+). Functionally, ATP-dependent carboxylate-amine ligase which exhibits weak glutamate--cysteine ligase activity. The sequence is that of Putative glutamate--cysteine ligase 2 from Chromobacterium violaceum (strain ATCC 12472 / DSM 30191 / JCM 1249 / CCUG 213 / NBRC 12614 / NCIMB 9131 / NCTC 9757 / MK).